We begin with the raw amino-acid sequence, 183 residues long: Capsid protein (183 aa).

Residues Asn-136 to Cys-183 are disordered. Residues Val-149 to Ser-176 are compositionally biased toward basic residues. Residues Ser-155, Ser-162, and Ser-170 each carry the phosphoserine; by host modification. The 1; half-length repeat unit spans residues Ser-155–Pro-161. The segment at Ser-155–Gln-177 is 3 X 8 AA repeats of S-P-R-R-R-[PR]-S-Q. The short motif at Arg-158–Arg-175 is the Bipartite nuclear localization signal element. 2 consecutive repeat copies span residues Ser-162–Gln-169 and Ser-170–Gln-177. An RNA binding region spans residues Gln-177 to Cys-183.

It belongs to the orthohepadnavirus core antigen family. As to quaternary structure, homodimerizes, then multimerizes. Interacts with cytosol exposed regions of viral L glycoprotein present in the reticulum-to-Golgi compartment. Interacts with human FLNB. Phosphorylated form interacts with host importin alpha; this interaction depends on the exposure of the NLS, which itself depends upon genome maturation and/or phosphorylation of the capsid protein. Interacts with host NUP153. In terms of processing, phosphorylated by host SRPK1, SRPK2, and maybe protein kinase C or GAPDH. Phosphorylation is critical for pregenomic RNA packaging. Protein kinase C phosphorylation is stimulated by HBx protein and may play a role in transport of the viral genome to the nucleus at the late step during the viral replication cycle.

The protein localises to the virion. The protein resides in the host cytoplasm. Functionally, self assembles to form an icosahedral capsid. Most capsids appear to be large particles with an icosahedral symmetry of T=4 and consist of 240 copies of capsid protein, though a fraction forms smaller T=3 particles consisting of 180 capsid proteins. Entering capsids are transported along microtubules to the nucleus. Phosphorylation of the capsid is thought to induce exposure of nuclear localization signal in the C-terminal portion of the capsid protein that allows binding to the nuclear pore complex via the importin (karyopherin-) alpha and beta. Capsids are imported in intact form through the nuclear pore into the nuclear basket, where it probably binds NUP153. Only capsids that contain the mature viral genome can release the viral DNA and capsid protein into the nucleoplasm. Immature capsids get stuck in the basket. Capsids encapsulate the pre-genomic RNA and the P protein. Pre-genomic RNA is reverse-transcribed into DNA while the capsid is still in the cytoplasm. The capsid can then either be directed to the nucleus, providing more genomes for transcription, or bud through the endoplasmic reticulum to provide new virions. The protein is Capsid protein of Hylobatidae (gibbons).